We begin with the raw amino-acid sequence, 240 residues long: UDP-2,3-diacylglucosamine hydrolase (240 aa).

Residues D8, H10, D41, N79, and H114 each contribute to the Mn(2+) site. 79–80 is a binding site for substrate; the sequence is NR. Substrate is bound by residues D122, S160, N164, K167, and H195. 2 residues coordinate Mn(2+): H195 and H197.

This sequence belongs to the LpxH family. Mn(2+) serves as cofactor.

Its subcellular location is the cell inner membrane. It carries out the reaction UDP-2-N,3-O-bis[(3R)-3-hydroxytetradecanoyl]-alpha-D-glucosamine + H2O = 2-N,3-O-bis[(3R)-3-hydroxytetradecanoyl]-alpha-D-glucosaminyl 1-phosphate + UMP + 2 H(+). Its pathway is glycolipid biosynthesis; lipid IV(A) biosynthesis; lipid IV(A) from (3R)-3-hydroxytetradecanoyl-[acyl-carrier-protein] and UDP-N-acetyl-alpha-D-glucosamine: step 4/6. In terms of biological role, hydrolyzes the pyrophosphate bond of UDP-2,3-diacylglucosamine to yield 2,3-diacylglucosamine 1-phosphate (lipid X) and UMP by catalyzing the attack of water at the alpha-P atom. Involved in the biosynthesis of lipid A, a phosphorylated glycolipid that anchors the lipopolysaccharide to the outer membrane of the cell. The sequence is that of UDP-2,3-diacylglucosamine hydrolase from Escherichia coli O6:H1 (strain CFT073 / ATCC 700928 / UPEC).